A 91-amino-acid chain; its full sequence is uncharacterized protein (91 aa).

Residues 1–21 (MKQLLASPSLQLVTYPASATA) form the signal peptide.

The protein belongs to the BhsA/McbA family.

The protein localises to the periplasm. This is an uncharacterized protein from Escherichia coli O157:H7.